Here is a 428-residue protein sequence, read N- to C-terminus: MQWTKSEQLYKEALQHIVGGVNSPSRSYKAVGGGAPVVMERAQGAYFWDVDGNKYIDYLAAYGPIIAGHAHPHIAEAIRRAAETGVLYGTPTPHEITFAKMLKEAIPSLEKVRFVNSGTEAVMTTIRVARAYTGRSKIVKFEGCYHGHSDLVLVAAGSGPSTLGTPDSAGVPPSIAQEVITVPYNDVESFREAMNVWGEQVAAVLVEPIVGNFGIVLPKPGFLEAINEIAHKEGALVIYDEVITAFRFMYGGAQNLLGVEPDLTAMGKIIGGGLPIGAYGGRQDIMEQVAPLGPAYQAGTMAGNPASVLAGIACLEVLKQEGVYEHLDRLGAMLEEGILAHARQCGLPVTVNRLKGALTVFFTDEKVENYKQAQRSDGELFAKFFKLMLKQGINLAPSKYEAWFITLAHTEDDIAYTIDAVGKAFRQL.

The residue at position 268 (K268) is an N6-(pyridoxal phosphate)lysine.

It belongs to the class-III pyridoxal-phosphate-dependent aminotransferase family. HemL subfamily. Homodimer. It depends on pyridoxal 5'-phosphate as a cofactor.

Its subcellular location is the cytoplasm. The enzyme catalyses (S)-4-amino-5-oxopentanoate = 5-aminolevulinate. It functions in the pathway porphyrin-containing compound metabolism; protoporphyrin-IX biosynthesis; 5-aminolevulinate from L-glutamyl-tRNA(Glu): step 2/2. This Geobacillus kaustophilus (strain HTA426) protein is Glutamate-1-semialdehyde 2,1-aminomutase 1.